Reading from the N-terminus, the 125-residue chain is MKYGEKIVSEFDVEKDLEIWPNEHKRDYLIKMTLPEFSCLCPRSGYPDYATIYLEYTPNERVVELKAIKLYINSFRDRHISHENSANEIYTVLERKLKPKYMKIVADYNPRGNVHTVIEIDSSKL.

Catalysis depends on C41, which acts as the Thioimide intermediate. D48 serves as the catalytic Proton donor. Residues V63–L65 and H82–E83 each bind substrate.

Belongs to the GTP cyclohydrolase I family. QueF type 1 subfamily.

The protein localises to the cytoplasm. It carries out the reaction 7-aminomethyl-7-carbaguanine + 2 NADP(+) = 7-cyano-7-deazaguanine + 2 NADPH + 3 H(+). It functions in the pathway tRNA modification; tRNA-queuosine biosynthesis. In terms of biological role, catalyzes the NADPH-dependent reduction of 7-cyano-7-deazaguanine (preQ0) to 7-aminomethyl-7-deazaguanine (preQ1). In Sulfurimonas denitrificans (strain ATCC 33889 / DSM 1251) (Thiomicrospira denitrificans (strain ATCC 33889 / DSM 1251)), this protein is NADPH-dependent 7-cyano-7-deazaguanine reductase.